We begin with the raw amino-acid sequence, 441 residues long: Amino-acid acetyltransferase (441 aa).

The N-acetyltransferase domain occupies 295–434 (EQIRRANIND…QALYNYQRRS (140 aa)).

Belongs to the acetyltransferase family. ArgA subfamily. Homohexamer.

It localises to the cytoplasm. The enzyme catalyses L-glutamate + acetyl-CoA = N-acetyl-L-glutamate + CoA + H(+). It functions in the pathway amino-acid biosynthesis; L-arginine biosynthesis; N(2)-acetyl-L-ornithine from L-glutamate: step 1/4. The chain is Amino-acid acetyltransferase from Edwardsiella ictaluri (strain 93-146).